Reading from the N-terminus, the 186-residue chain is Peptidyl-tRNA hydrolase (186 aa).

Position 14 (tyrosine 14) interacts with tRNA. The active-site Proton acceptor is the histidine 19. Tyrosine 64, asparagine 66, and asparagine 112 together coordinate tRNA.

The protein belongs to the PTH family. Monomer.

It localises to the cytoplasm. It carries out the reaction an N-acyl-L-alpha-aminoacyl-tRNA + H2O = an N-acyl-L-amino acid + a tRNA + H(+). Its function is as follows. Hydrolyzes ribosome-free peptidyl-tRNAs (with 1 or more amino acids incorporated), which drop off the ribosome during protein synthesis, or as a result of ribosome stalling. Functionally, catalyzes the release of premature peptidyl moieties from peptidyl-tRNA molecules trapped in stalled 50S ribosomal subunits, and thus maintains levels of free tRNAs and 50S ribosomes. The protein is Peptidyl-tRNA hydrolase of Bacillus cereus (strain ATCC 10987 / NRS 248).